The following is a 226-amino-acid chain: tRNA (guanine-N(7)-)-methyltransferase (226 aa).

3 residues coordinate S-adenosyl-L-methionine: Asp59, Glu84, and Asp111. Residue Asp169 participates in substrate binding.

It belongs to the class I-like SAM-binding methyltransferase superfamily. TrmB family.

It catalyses the reaction guanosine(46) in tRNA + S-adenosyl-L-methionine = N(7)-methylguanosine(46) in tRNA + S-adenosyl-L-homocysteine. The protein operates within tRNA modification; N(7)-methylguanine-tRNA biosynthesis. Functionally, catalyzes the formation of N(7)-methylguanine at position 46 (m7G46) in tRNA. The polypeptide is tRNA (guanine-N(7)-)-methyltransferase (Chloroherpeton thalassium (strain ATCC 35110 / GB-78)).